The sequence spans 218 residues: ATP phosphoribosyltransferase (218 aa).

It belongs to the ATP phosphoribosyltransferase family. Short subfamily. As to quaternary structure, heteromultimer composed of HisG and HisZ subunits.

Its subcellular location is the cytoplasm. It carries out the reaction 1-(5-phospho-beta-D-ribosyl)-ATP + diphosphate = 5-phospho-alpha-D-ribose 1-diphosphate + ATP. It functions in the pathway amino-acid biosynthesis; L-histidine biosynthesis; L-histidine from 5-phospho-alpha-D-ribose 1-diphosphate: step 1/9. Its function is as follows. Catalyzes the condensation of ATP and 5-phosphoribose 1-diphosphate to form N'-(5'-phosphoribosyl)-ATP (PR-ATP). Has a crucial role in the pathway because the rate of histidine biosynthesis seems to be controlled primarily by regulation of HisG enzymatic activity. This chain is ATP phosphoribosyltransferase (hisG), found in Deinococcus radiodurans (strain ATCC 13939 / DSM 20539 / JCM 16871 / CCUG 27074 / LMG 4051 / NBRC 15346 / NCIMB 9279 / VKM B-1422 / R1).